The following is a 67-amino-acid chain: Large ribosomal subunit protein uL30 (67 aa).

It belongs to the universal ribosomal protein uL30 family. In terms of assembly, part of the 50S ribosomal subunit.

The chain is Large ribosomal subunit protein uL30 from Thermotoga petrophila (strain ATCC BAA-488 / DSM 13995 / JCM 10881 / RKU-1).